A 421-amino-acid chain; its full sequence is Lipid II:glycine glycyltransferase (421 aa).

The protein belongs to the FemABX family. As to quaternary structure, monomer.

Its subcellular location is the cytoplasm. It carries out the reaction beta-D-GlcNAc-(1-&gt;4)-Mur2Ac(oyl-L-Ala-D-isoglutaminyl-L-Lys-D-Ala-D-Ala)-di-trans,octa-cis-undecaprenyl diphosphate + glycyl-tRNA(Gly) = beta-D-GlcNAc-(1-&gt;4)-Mur2Ac(oyl-L-Ala-D-isoglutaminyl-L-Lys-(N(6)-Gly)-D-Ala-D-Ala)-di-trans,octa-cis-undecaprenyl diphosphate + tRNA(Gly) + H(+). Its function is as follows. Catalyzes the incorporation of the first glycine of the pentaglycine interpeptide bridge, which is characteristic of the S.aureus peptidoglycan. This glycine is added to the epsilon-amino group of the L-lysine of the membrane-bound lipid II intermediate (GlcNAc-(beta-1,4)-N-acetylmuramic acid(-L-Ala-D-iGln-L-Lys-D-Ala-D-Ala)-pyrophosphoryl-undecaprenol), using glycyl-tRNA(Gly) as donor, in a ribosome-independent mechanism. The chain is Lipid II:glycine glycyltransferase (femX) from Staphylococcus aureus (strain bovine RF122 / ET3-1).